The sequence spans 257 residues: 5-oxoprolinase subunit A (257 aa).

It belongs to the LamB/PxpA family. In terms of assembly, forms a complex composed of PxpA, PxpB and PxpC.

It carries out the reaction 5-oxo-L-proline + ATP + 2 H2O = L-glutamate + ADP + phosphate + H(+). Catalyzes the cleavage of 5-oxoproline to form L-glutamate coupled to the hydrolysis of ATP to ADP and inorganic phosphate. In Halalkalibacterium halodurans (strain ATCC BAA-125 / DSM 18197 / FERM 7344 / JCM 9153 / C-125) (Bacillus halodurans), this protein is 5-oxoprolinase subunit A.